A 138-amino-acid polypeptide reads, in one-letter code: Superoxide dismutase [Mn] (138 aa).

Residues His-2, His-49, Asp-133, and His-137 each coordinate Mn(2+).

It belongs to the iron/manganese superoxide dismutase family. It depends on Mn(2+) as a cofactor.

It carries out the reaction 2 superoxide + 2 H(+) = H2O2 + O2. In terms of biological role, destroys superoxide anion radicals which are normally produced within the cells and which are toxic to biological systems. The sequence is that of Superoxide dismutase [Mn] (sodA) from Mycobacterium szulgai.